The following is a 126-amino-acid chain: MQNLNNKQKTLIIFLGIITFGIFIIYFFTKAKKVSQIRNTHLIVSSNIPFSLNDFYNCIGSKNNLVNVDATINTLKIELKEINALNNEKLKVLGAKGIMCNQTKISIIFGDFCLELKELIKKDLFS.

The chain crosses the membrane as a helical span at residues 11–31; it reads LIIFLGIITFGIFIIYFFTKA. The region spanning 49-126 is the PTS EIIB type-1 domain; it reads PFSLNDFYNC…KELIKKDLFS (78 aa).

The protein to M.genitalium MG129 and M.pneumoniae MPN268.

It is found in the membrane. The phosphoenolpyruvate-dependent sugar phosphotransferase system (PTS), a major carbohydrate active -transport system, catalyzes the phosphorylation of incoming sugar substrates concomitant with their translocation across the cell membrane. The chain is Putative phosphotransferase enzyme IIB component UU178 from Ureaplasma parvum serovar 3 (strain ATCC 700970).